A 689-amino-acid chain; its full sequence is Polyribonucleotide nucleotidyltransferase (689 aa).

The Mg(2+) site is built by D482 and D488. The 60-residue stretch at 549–608 (PRMITLTIPQNKIGELIGPGGKNIRKIQEDNNVKIDIEETGRVFISGVESDGVKSAKEYV) folds into the KH domain. The S1 motif domain occupies 618 to 686 (GKIYKSRVTK…KQGRINLSIK (69 aa)).

The protein belongs to the polyribonucleotide nucleotidyltransferase family. It depends on Mg(2+) as a cofactor.

It localises to the cytoplasm. The catalysed reaction is RNA(n+1) + phosphate = RNA(n) + a ribonucleoside 5'-diphosphate. In terms of biological role, involved in mRNA degradation. Catalyzes the phosphorolysis of single-stranded polyribonucleotides processively in the 3'- to 5'-direction. In Endomicrobium trichonymphae, this protein is Polyribonucleotide nucleotidyltransferase.